Here is a 104-residue protein sequence, read N- to C-terminus: MAEAVIQIEVVYASVQRQVLMTLDVPAGSSVRQALALSGMDREFPELDLAQCAVGIFGKVVADPSTRVLEAGERIEIYRPLLADPMEIRRLRAARAREKRTLPG.

The protein belongs to the UPF0125 (RnfH) family.

The polypeptide is Protein RnfH (Pseudomonas savastanoi pv. phaseolicola (strain 1448A / Race 6) (Pseudomonas syringae pv. phaseolicola (strain 1448A / Race 6))).